A 502-amino-acid chain; its full sequence is ATP synthase subunit alpha 1/3 (502 aa).

Residue G169 to T176 participates in ATP binding.

Belongs to the ATPase alpha/beta chains family. In terms of assembly, F-type ATPases have 2 components, CF(1) - the catalytic core - and CF(0) - the membrane proton channel. CF(1) has five subunits: alpha(3), beta(3), gamma(1), delta(1), epsilon(1). CF(0) has three main subunits: a(1), b(2) and c(9-12). The alpha and beta chains form an alternating ring which encloses part of the gamma chain. CF(1) is attached to CF(0) by a central stalk formed by the gamma and epsilon chains, while a peripheral stalk is formed by the delta and b chains.

The protein localises to the cell inner membrane. The catalysed reaction is ATP + H2O + 4 H(+)(in) = ADP + phosphate + 5 H(+)(out). Produces ATP from ADP in the presence of a proton gradient across the membrane. The alpha chain is a regulatory subunit. In Syntrophotalea carbinolica (strain DSM 2380 / NBRC 103641 / GraBd1) (Pelobacter carbinolicus), this protein is ATP synthase subunit alpha 1/3.